The following is a 432-amino-acid chain: Adenosylhomocysteinase (432 aa).

Positions 57, 131, and 156 each coordinate substrate. 157–159 serves as a coordination point for NAD(+); the sequence is TTT. The residue at position 183 (S183) is a Phosphoserine. Residues K186 and D190 each contribute to the substrate site. The residue at position 186 (K186) is an N6-(2-hydroxyisobutyryl)lysine. Y193 is subject to Phosphotyrosine. Residues 222 to 227, E243, N248, 299 to 301, N346, H353, K426, 426 to 430, and Y430 each bind NAD(+); these read GDVGKG, IGH, and KPDHY.

Belongs to the adenosylhomocysteinase family. Homotetramer. Interaction with AHCYL1. It depends on NAD(+) as a cofactor.

Its subcellular location is the cytoplasm. The protein resides in the melanosome. It localises to the nucleus. It is found in the endoplasmic reticulum. The enzyme catalyses S-adenosyl-L-homocysteine + H2O = L-homocysteine + adenosine. It participates in amino-acid biosynthesis; L-homocysteine biosynthesis; L-homocysteine from S-adenosyl-L-homocysteine: step 1/1. In terms of biological role, catalyzes the hydrolysis of S-adenosyl-L-homocysteine to form adenosine and homocysteine. Binds copper ions. The chain is Adenosylhomocysteinase (Ahcy) from Rattus norvegicus (Rat).